Here is an 844-residue protein sequence, read N- to C-terminus: Bifunctional abietadiene synthase, chloroplastic (844 aa).

The N-terminal 46 residues, glutamine 1–tyrosine 46, are a transit peptide targeting the chloroplast. Lysine 245 serves as a coordination point for substrate. Aspartate 378 and aspartate 380 together coordinate Mg(2+). The DXDD motif signature appears at aspartate 378–aspartate 381. Residue lysine 465 participates in substrate binding. Mg(2+)-binding residues include aspartate 597, aspartate 601, asparagine 741, threonine 745, and glutamate 749. Residues aspartate 597 to aspartate 601 carry the DDXXD motif motif.

The protein belongs to the terpene synthase family. Tpsd subfamily. As to quaternary structure, monomer. Requires Mg(2+) as cofactor.

The protein resides in the plastid. It localises to the chloroplast. It carries out the reaction (2E,6E,10E)-geranylgeranyl diphosphate = (+)-copalyl diphosphate. It catalyses the reaction (+)-copalyl diphosphate = abieta-7,13-diene + diphosphate. The catalysed reaction is (+)-copalyl diphosphate = neoabietadiene + diphosphate. The enzyme catalyses (+)-copalyl diphosphate = abieta-8(14),12-diene + diphosphate. It participates in terpene metabolism; oleoresin biosynthesis. Involved in defensive oleoresin formation in conifers in response to insect attack or other injury. Involved in diterpene (C20) olefins biosynthesis. Bifunctional enzyme that catalyzes two sequential cyclizations of geranylgeranyl diphosphate (GGPP) to abietadiene. The copalyl diphosphate (CPP) intermediate diffuses freely between the 2 active sites in the enzyme. This chain is Bifunctional abietadiene synthase, chloroplastic (LAS), found in Abies balsamea (Balsam fir).